The sequence spans 364 residues: DNA replication and repair protein RecF (364 aa).

30–37 (GNNGQGKT) is a binding site for ATP.

It belongs to the RecF family.

The protein resides in the cytoplasm. In terms of biological role, the RecF protein is involved in DNA metabolism; it is required for DNA replication and normal SOS inducibility. RecF binds preferentially to single-stranded, linear DNA. It also seems to bind ATP. In Geotalea daltonii (strain DSM 22248 / JCM 15807 / FRC-32) (Geobacter daltonii), this protein is DNA replication and repair protein RecF.